The following is a 147-amino-acid chain: Protein SprT-like (147 aa).

The SprT-like domain occupies 5–142; that stretch reads DYVNEVSLED…SFCRGHLKEI (138 aa). H64 provides a ligand contact to Zn(2+). E65 is an active-site residue. Residue H68 participates in Zn(2+) binding.

It belongs to the SprT family. Requires Zn(2+) as cofactor.

It is found in the cytoplasm. The sequence is that of Protein SprT-like from Streptococcus uberis (strain ATCC BAA-854 / 0140J).